Reading from the N-terminus, the 43-residue chain is Protein PsbN (43 aa).

Residues 7-27 (LSIAIGSILLVITGFAIYTAF) traverse the membrane as a helical segment.

The protein belongs to the PsbN family.

The protein localises to the cellular thylakoid membrane. In terms of biological role, may play a role in photosystem I and II biogenesis. In Crocosphaera subtropica (strain ATCC 51142 / BH68) (Cyanothece sp. (strain ATCC 51142)), this protein is Protein PsbN.